Reading from the N-terminus, the 200-residue chain is NAD(P)H dehydrogenase (quinone) (200 aa).

The 188-residue stretch at valine 4–valine 191 folds into the Flavodoxin-like domain. FMN-binding positions include serine 10 to valine 15 and threonine 79 to phenylalanine 81. Residue tyrosine 12 coordinates NAD(+). Residue tryptophan 99 coordinates substrate. FMN is bound by residues serine 114 to glycine 120 and histidine 135.

This sequence belongs to the WrbA family. FMN serves as cofactor.

The enzyme catalyses a quinone + NADH + H(+) = a quinol + NAD(+). It catalyses the reaction a quinone + NADPH + H(+) = a quinol + NADP(+). The protein is NAD(P)H dehydrogenase (quinone) of Burkholderia vietnamiensis (strain G4 / LMG 22486) (Burkholderia cepacia (strain R1808)).